We begin with the raw amino-acid sequence, 243 residues long: Carboxy-S-adenosyl-L-methionine synthase (243 aa).

Residues tyrosine 39, 64–66, 89–90, 117–118, asparagine 132, and arginine 199 each bind S-adenosyl-L-methionine; these read GCS, DN, and DL.

Belongs to the class I-like SAM-binding methyltransferase superfamily. Cx-SAM synthase family. Homodimer.

The catalysed reaction is prephenate + S-adenosyl-L-methionine = carboxy-S-adenosyl-L-methionine + 3-phenylpyruvate + H2O. Catalyzes the conversion of S-adenosyl-L-methionine (SAM) to carboxy-S-adenosyl-L-methionine (Cx-SAM). This chain is Carboxy-S-adenosyl-L-methionine synthase, found in Pseudoalteromonas atlantica (strain T6c / ATCC BAA-1087).